The primary structure comprises 835 residues: Microcephalin (835 aa).

The region spanning 1-93 (MAAPILKDVV…AHIDESLFPA (93 aa)) is the BRCT 1 domain. S279, S287, S296, and S333 each carry phosphoserine. Disordered stretches follow at residues 313-381 (PDQK…RRSI) and 419-443 (DNLK…AQLS). The residue at position 335 (T335) is a Phosphothreonine. Basic residues predominate over residues 343–361 (LLIHSRPRSSSVKRKRVSH). Positions 434–443 (QLPSSPAQLS) are enriched in polar residues. S548 bears the Phosphoserine mark. The disordered stretch occupies residues 555 to 584 (AVGLKSTQNKGTTSKISNSSEGEAQSEHEP). Over residues 559 to 577 (KSTQNKGTTSKISNSSEGE) the composition is skewed to polar residues. BRCT domains lie at 640 to 730 (SGRG…PFEL) and 751 to 833 (YRGT…NYLL).

Interacts with CDC27 and maybe other components of the APC/C complex. Interacts with histone variant H2AX under DNA damage conditions. As to expression, expressed in fetal brain, liver and kidney.

The protein localises to the cytoplasm. The protein resides in the cytoskeleton. It is found in the microtubule organizing center. It localises to the centrosome. In terms of biological role, implicated in chromosome condensation and DNA damage induced cellular responses. May play a role in neurogenesis and regulation of the size of the cerebral cortex. This is Microcephalin from Homo sapiens (Human).